Consider the following 90-residue polypeptide: MALDMAKKKEIIAKFARDSKDTGSSEVQIALLSQRIADLTEHLKANPKDHSSRLGLLKLVGQRKSLLSYLKKTQYNRYAKLIGELKLKDR.

Belongs to the universal ribosomal protein uS15 family. In terms of assembly, part of the 30S ribosomal subunit. Forms a bridge to the 50S subunit in the 70S ribosome, contacting the 23S rRNA.

One of the primary rRNA binding proteins, it binds directly to 16S rRNA where it helps nucleate assembly of the platform of the 30S subunit by binding and bridging several RNA helices of the 16S rRNA. In terms of biological role, forms an intersubunit bridge (bridge B4) with the 23S rRNA of the 50S subunit in the ribosome. This is Small ribosomal subunit protein uS15 from Helicobacter hepaticus (strain ATCC 51449 / 3B1).